The sequence spans 272 residues: Putative phosphoenolpyruvate synthase regulatory protein (272 aa).

Residue 152-159 (GVSRCGKT) participates in ADP binding.

Belongs to the pyruvate, phosphate/water dikinase regulatory protein family. PSRP subfamily.

It carries out the reaction [pyruvate, water dikinase] + ADP = [pyruvate, water dikinase]-phosphate + AMP + H(+). The enzyme catalyses [pyruvate, water dikinase]-phosphate + phosphate + H(+) = [pyruvate, water dikinase] + diphosphate. In terms of biological role, bifunctional serine/threonine kinase and phosphorylase involved in the regulation of the phosphoenolpyruvate synthase (PEPS) by catalyzing its phosphorylation/dephosphorylation. The chain is Putative phosphoenolpyruvate synthase regulatory protein from Stutzerimonas stutzeri (strain A1501) (Pseudomonas stutzeri).